We begin with the raw amino-acid sequence, 158 residues long: Endoribonuclease YbeY (158 aa).

Zn(2+) is bound by residues histidine 119, histidine 123, and histidine 129.

Belongs to the endoribonuclease YbeY family. Zn(2+) serves as cofactor.

The protein localises to the cytoplasm. Functionally, single strand-specific metallo-endoribonuclease involved in late-stage 70S ribosome quality control and in maturation of the 3' terminus of the 16S rRNA. This is Endoribonuclease YbeY from Shewanella woodyi (strain ATCC 51908 / MS32).